The primary structure comprises 592 residues: Inactive metallocarboxypeptidase ECM14 (592 aa).

The signal sequence occupies residues 1 to 21 (MRQFTHGTLLAILALANTISA). A propeptide spanning residues 22-174 (IPSFSANNYP…QTVYESYPSS (153 aa)) is cleaved from the precursor. A compositionally biased stretch (polar residues) spans 170 to 179 (SYPSSSQRPT). Positions 170 to 191 (SYPSSSQRPTDNGRGFLPSRES) are disordered. A Peptidase M14 domain is found at 202–521 (DYQPLSVIGP…NAVMVLAKFL (320 aa)). Zn(2+) contacts are provided by His-264 and Glu-267. Substrate-binding positions include 264 to 267 (HARE), Arg-322, and 339 to 340 (DR). Cys-333 and Cys-356 are disulfide-bonded. Asn-349 is a glycosylation site (N-linked (GlcNAc...) asparagine). His-396 contacts Zn(2+). Residue 397–398 (SY) coordinates substrate. A disordered region spans residues 542 to 592 (ADKPILDDGDDDEEEDGQDKKDDSWIPDEYKNDNDHDDDDDGWGLRRRRKR). A compositionally biased stretch (acidic residues) spans 548-558 (DDGDDDEEEDG). A compositionally biased stretch (basic and acidic residues) spans 559-575 (QDKKDDSWIPDEYKNDN).

It belongs to the peptidase M14 family. Requires Zn(2+) as cofactor.

The protein localises to the vacuole. It localises to the secreted. Functionally, inactive carboxypeptidase that may play a role in cell wall organization and biogenesis. The sequence is that of Inactive metallocarboxypeptidase ECM14 (ECM14) from Ajellomyces dermatitidis (strain ER-3 / ATCC MYA-2586) (Blastomyces dermatitidis).